The sequence spans 265 residues: Small ribosomal subunit protein eS1 (265 aa).

Disordered regions lie at residues 1–24 (MTQG…RTID) and 240–265 (HEKK…LLAQ). Basic and acidic residues predominate over residues 240 to 253 (HEKKGEKATGRDGA).

The protein belongs to the eukaryotic ribosomal protein eS1 family. Component of the small ribosomal subunit. Mature ribosomes consist of a small (40S) and a large (60S) subunit. The 40S subunit contains about 33 different proteins and 1 molecule of RNA (18S). The 60S subunit contains about 49 different proteins and 3 molecules of RNA (25S, 5.8S and 5S).

It localises to the cytoplasm. In Tetrahymena thermophila (strain SB210), this protein is Small ribosomal subunit protein eS1.